The primary structure comprises 461 residues: Carboxypeptidase Rv3627c (461 aa).

The first 28 residues, 1-28 (MGPTRWRKSTHVVVGAAVLAFVAVVVAA), serve as a signal peptide directing secretion. Ser114 serves as the catalytic Acyl-ester intermediate. Residue Lys117 is the Proton acceptor of the active site. Ser295 is an active-site residue.

The protein belongs to the peptidase S13 family.

In terms of biological role, carboxypeptidase that cleaves terminal D-alanine from peptidoglycan in the mycobacterial cell wall. May cleave L-Lys-D-Ala and/or D-Ala-D-Ala peptide bonds. Exerts important effects on mycobacterial cell morphology and cell division. This chain is Carboxypeptidase Rv3627c, found in Mycobacterium tuberculosis (strain ATCC 25618 / H37Rv).